Here is a 327-residue protein sequence, read N- to C-terminus: Pantothenate kinase (327 aa).

105-112 (GSVAVGKS) is a binding site for ATP.

The protein belongs to the prokaryotic pantothenate kinase family.

The protein resides in the cytoplasm. It catalyses the reaction (R)-pantothenate + ATP = (R)-4'-phosphopantothenate + ADP + H(+). It functions in the pathway cofactor biosynthesis; coenzyme A biosynthesis; CoA from (R)-pantothenate: step 1/5. The sequence is that of Pantothenate kinase from Cutibacterium acnes (strain DSM 16379 / KPA171202) (Propionibacterium acnes).